We begin with the raw amino-acid sequence, 269 residues long: Zinc transporter ZupT (269 aa).

8 helical membrane passes run alanine 12 to phenylalanine 32, leucine 41 to phenylalanine 61, aspartate 75 to isoleucine 95, methionine 126 to alanine 146, alanine 152 to isoleucine 172, valine 187 to valine 207, phenylalanine 211 to leucine 231, and threonine 249 to phenylalanine 269. Fe(2+)-binding residues include asparagine 136 and glutamate 139. Zn(2+) is bound by residues glutamate 139 and histidine 164. 3 residues coordinate Fe(2+): asparagine 165, glutamate 168, and glutamate 197. Glutamate 168 provides a ligand contact to Zn(2+).

It belongs to the ZIP transporter (TC 2.A.5) family. ZupT subfamily.

It is found in the cell inner membrane. The enzyme catalyses Zn(2+)(in) = Zn(2+)(out). Its function is as follows. Mediates zinc uptake. May also transport other divalent cations. This Neisseria meningitidis serogroup A / serotype 4A (strain DSM 15465 / Z2491) protein is Zinc transporter ZupT.